The primary structure comprises 274 residues: N-acetylmuramic acid 6-phosphate etherase (274 aa).

Residues 52-215 (IVPRMEQGGR…STSIMIRLGR (164 aa)) enclose the SIS domain. The active-site Proton donor is the glutamate 80. Residue glutamate 111 is part of the active site.

The protein belongs to the GCKR-like family. MurNAc-6-P etherase subfamily. In terms of assembly, homodimer.

It carries out the reaction N-acetyl-D-muramate 6-phosphate + H2O = N-acetyl-D-glucosamine 6-phosphate + (R)-lactate. Its pathway is amino-sugar metabolism; N-acetylmuramate degradation. In terms of biological role, specifically catalyzes the cleavage of the D-lactyl ether substituent of MurNAc 6-phosphate, producing GlcNAc 6-phosphate and D-lactate. This chain is N-acetylmuramic acid 6-phosphate etherase, found in Porphyromonas gingivalis (strain ATCC 33277 / DSM 20709 / CIP 103683 / JCM 12257 / NCTC 11834 / 2561).